The sequence spans 781 residues: Transcription factor Sp3 (781 aa).

The span at 1-12 (MTAPEKPVKQEE) shows a compositional bias: basic and acidic residues. Disordered regions lie at residues 1–53 (MTAP…AAQD) and 65–88 (TCSK…AGAP). Residues 20–31 (SGGGGGGGGGHG) show a composition bias toward gly residues. Over residues 32–53 (EYLQQQQQHGNGAVAAAAAAQD) the composition is skewed to low complexity. S73 carries the post-translational modification Phosphoserine. Residue K120 forms a Glycyl lysine isopeptide (Lys-Gly) (interchain with G-Cter in SUMO) linkage. The segment at 138-237 (QYVLPLQNLQ…IPQTGQVQVQ (100 aa)) is transactivation domain (Gln-rich). Residues 301–338 (QAMDSSDNSERTGERVSPDINETNTDTDLFVPTSSSSQ) form a disordered region. Basic and acidic residues predominate over residues 308-317 (NSERTGERVS). A compositionally biased stretch (polar residues) spans 320-338 (INETNTDTDLFVPTSSSSQ). Positions 350–499 (QQNTNSLTTS…TPVQTLTLGQ (150 aa)) are transactivation domain (Gln-rich). Residues 461 to 469 (VTWQTFQVQ) carry the 9aaTAD motif. The interval 534–620 (IQLHPGENAD…RGTNLGKKKQ (87 aa)) is repressor domain. The residue at position 551 (K551) is an N6-acetyllysine; alternate. K551 participates in a covalent cross-link: Glycyl lysine isopeptide (Lys-Gly) (interchain with G-Cter in SUMO); alternate. K551 participates in a covalent cross-link: Glycyl lysine isopeptide (Lys-Gly) (interchain with G-Cter in SUMO1); alternate. K551 participates in a covalent cross-link: Glycyl lysine isopeptide (Lys-Gly) (interchain with G-Cter in SUMO2); alternate. A phosphoserine mark is found at S563 and S566. K593 is covalently cross-linked (Glycyl lysine isopeptide (Lys-Gly) (interchain with G-Cter in SUMO2)). The C2H2-type 1 zinc-finger motif lies at 621–645 (HICHIPGCGKVYGKTSHLRAHLRWH). S646 bears the Phosphoserine mark. C2H2-type zinc fingers lie at residues 651–675 (FVCN…RRTH) and 681–703 (FVCP…IKTH).

It belongs to the Sp1 C2H2-type zinc-finger protein family. In terms of assembly, interacts with HLTF; the interaction may be required for basal transcriptional activity of HLTF. Interacts with HDAC1; the interaction deacetylates SP3 and regulates its transcriptional activity. Interacts with HDAC2 (preferably the CK2-phosphorylated form); the interaction deacetylates SP3 and regulates its transcriptional activity. Interacts with MEIS2 isoform 4 and PBX1 isoform PBX1a. Not glycosylated. Post-translationally, acetylated by histone acetyltransferase p300, deacetylated by HDACs. Acetylation/deacetylation states regulate transcriptional activity. Acetylation appears to activate transcription. Alternate sumoylation and acetylation at Lys-551 also control transcriptional activity. Ceramides can also regulate acetylation/deacetylation events through altering the interaction of HDAC with SP3. In vitro, C(18)-ceramides, but not C(16)-ceramides, increase the interaction of HDAC1 with SP3 and enhance the deacetylation of SP3 and the subsequent repression of the TERT promoter. In terms of processing, sumoylated on all isoforms. Sumoylated on 2 sites in longer isoforms with Lys-551 being the major site. Sumoylation at this site promotes nuclear localization to the nuclear periphery, nuclear dots and PML nuclear bodies. Sumoylation on Lys-551 represses the transactivation activity, except for the largest isoform, L-Sp3, which has little effect on transactivation. Alternate sumoylation and acetylation at Lys-551 also control transcriptional activity. As to expression, ubiquitously expressed.

Its subcellular location is the nucleus. The protein resides in the PML body. Functionally, transcriptional factor that can act as an activator or repressor depending on isoform and/or post-translational modifications. Binds to GT and GC boxes promoter elements. Competes with SP1 for the GC-box promoters. Weak activator of transcription but can activate a number of genes involved in different processes such as cell-cycle regulation, hormone-induction and house-keeping. The protein is Transcription factor Sp3 (SP3) of Homo sapiens (Human).